A 26-amino-acid chain; its full sequence is Conotoxin reg6(gamma) (26 aa).

Residues 1 to 12 are compositionally biased toward acidic residues; that stretch reads RVLEPGXEDPDV. Residues 1–26 are disordered; the sequence is RVLEPGXEDPDVGEPAGEYEHHLLEX. A 4-carboxyglutamate modification is found at Glu4. The residue at position 5 (Pro5) is a 4-hydroxyproline. Glu8 is modified (4-carboxyglutamate). Position 10 is a 4-hydroxyproline (Pro10). A 4-carboxyglutamate modification is found at Glu14. Pro15 carries the 4-hydroxyproline modification. A 4-carboxyglutamate mark is found at Glu18, Glu20, and Glu25.

Expressed by the venom duct.

It is found in the secreted. The sequence is that of Conotoxin reg6(gamma) from Conus regius (Crown cone).